Reading from the N-terminus, the 245-residue chain is Ribosomal protein L11 methyltransferase (245 aa).

S-adenosyl-L-methionine is bound by residues T101, G122, D144, and N184.

Belongs to the methyltransferase superfamily. PrmA family.

The protein localises to the cytoplasm. It carries out the reaction L-lysyl-[protein] + 3 S-adenosyl-L-methionine = N(6),N(6),N(6)-trimethyl-L-lysyl-[protein] + 3 S-adenosyl-L-homocysteine + 3 H(+). In terms of biological role, methylates ribosomal protein L11. The protein is Ribosomal protein L11 methyltransferase of Aquifex aeolicus (strain VF5).